A 217-amino-acid chain; its full sequence is Adenylate kinase (217 aa).

10-15 is a binding site for ATP; the sequence is GAGKGT. The NMP stretch occupies residues 30–59; that stretch reads STGDMFRAAIKAGTALGMKAKEYMDAGSLV. AMP contacts are provided by residues T31, R36, 57–59, 85–88, and Q92; these read SLV and GFPR. The interval 126 to 163 is LID; that stretch reads GRRICRQCGGTYHMVFNPPAAEAVCDKCGGELYQRSDD. An ATP-binding site is contributed by R127. The Zn(2+) site is built by C130 and C133. ATP is bound at residue 136 to 137; the sequence is TY. Residues C150 and C153 each coordinate Zn(2+). The AMP site is built by R160 and R171. Q199 lines the ATP pocket.

Belongs to the adenylate kinase family. As to quaternary structure, monomer.

It localises to the cytoplasm. The enzyme catalyses AMP + ATP = 2 ADP. It functions in the pathway purine metabolism; AMP biosynthesis via salvage pathway; AMP from ADP: step 1/1. Catalyzes the reversible transfer of the terminal phosphate group between ATP and AMP. Plays an important role in cellular energy homeostasis and in adenine nucleotide metabolism. The sequence is that of Adenylate kinase from Desulfitobacterium hafniense (strain DSM 10664 / DCB-2).